Consider the following 601-residue polypeptide: ATP-dependent RNA helicase DeaD (601 aa).

The Q motif motif lies at 6 to 34 (STFSFLGLNPFIIQSLNEMGYVKPSPIQA). The Helicase ATP-binding domain occupies 37 to 208 (IPLLLEGRDV…KRFMRNPKEI (172 aa)). 50–57 (AQTGSGKT) contributes to the ATP binding site. The short motif at 156 to 159 (DEAD) is the DEAD box element. The region spanning 231–378 (KTDALIRFLE…EVQLPKVELL (148 aa)) is the Helicase C-terminal domain. Basic and acidic residues predominate over residues 552–576 (SRHYENKTTHRSIFNKDKNSNRRVS). Residues 552-601 (SRHYENKTTHRSIFNKDKNSNRRVSDGSFNKSNSPKKTEFKSSFFRRRNV) form a disordered region.

It belongs to the DEAD box helicase family. DeaD/CsdA subfamily.

Its subcellular location is the cytoplasm. It catalyses the reaction ATP + H2O = ADP + phosphate + H(+). Its function is as follows. DEAD-box RNA helicase involved in various cellular processes at low temperature, including ribosome biogenesis, mRNA degradation and translation initiation. In Buchnera aphidicola subsp. Acyrthosiphon pisum (strain APS) (Acyrthosiphon pisum symbiotic bacterium), this protein is ATP-dependent RNA helicase DeaD.